Here is a 184-residue protein sequence, read N- to C-terminus: Putative serine carboxypeptidase-like 52 (184 aa).

An N-terminal signal peptide occupies residues 1–22 (MRTFSPKLLLLLLLVLRHHAES). Asn-93 carries N-linked (GlcNAc...) asparagine glycosylation.

It belongs to the peptidase S10 family.

The protein localises to the secreted. The sequence is that of Putative serine carboxypeptidase-like 52 (SCPL52) from Arabidopsis thaliana (Mouse-ear cress).